Reading from the N-terminus, the 230-residue chain is uncharacterized protein (230 aa).

7 consecutive transmembrane segments (helical) span residues 8 to 28 (SLIL…TMAF), 45 to 65 (SIIL…FIIF), 72 to 92 (LVLL…FLYL), 109 to 129 (PFSL…SVIS), 141 to 161 (IYVL…LLLA), 176 to 196 (MGIL…AIIF), and 203 to 223 (IYFL…LILF).

This sequence to P.aeruginosa PA0043 and M.thermoautotrophicum MTH1451.

Its subcellular location is the cell membrane. This is an uncharacterized protein from Aquifex aeolicus (strain VF5).